A 452-amino-acid polypeptide reads, in one-letter code: Tissue alpha-L-fucosidase (452 aa).

The signal sequence occupies residues 1–17; the sequence is MLLLLLLLLVAAAQAVA. Asn227, Asn254, Asn368, and Asn378 each carry an N-linked (GlcNAc...) asparagine glycan.

This sequence belongs to the glycosyl hydrolase 29 family. As to quaternary structure, homotetramer.

It localises to the lysosome. It carries out the reaction an alpha-L-fucoside + H2O = L-fucose + an alcohol. The enzyme catalyses a neolactoside IV(2)-alpha-Fuc-nLc4Cer(d18:1(4E)) + H2O = a neolactoside nLc4Cer(d18:1(4E)) + L-fucose. The catalysed reaction is a neolactoside IV(2)-alpha-Fuc-nLc4Cer(d18:0) + H2O = a neolactoside nLc4Cer(d18:0) + L-fucose. Its function is as follows. Alpha-L-fucosidase is responsible for hydrolyzing the alpha-1,6-linked fucose joined to the reducing-end N-acetylglucosamine of the carbohydrate moieties of glycoproteins. The chain is Tissue alpha-L-fucosidase (Fuca1) from Mus musculus (Mouse).